The sequence spans 350 residues: Methylthioribose-1-phosphate isomerase (350 aa).

Residues 47 to 49, arginine 90, and glutamine 197 contribute to the substrate site; that span reads RGA. Residue aspartate 238 is the Proton donor of the active site. 248–249 provides a ligand contact to substrate; it reads NK.

It belongs to the eIF-2B alpha/beta/delta subunits family. MtnA subfamily.

It catalyses the reaction 5-(methylsulfanyl)-alpha-D-ribose 1-phosphate = 5-(methylsulfanyl)-D-ribulose 1-phosphate. It functions in the pathway amino-acid biosynthesis; L-methionine biosynthesis via salvage pathway; L-methionine from S-methyl-5-thio-alpha-D-ribose 1-phosphate: step 1/6. Catalyzes the interconversion of methylthioribose-1-phosphate (MTR-1-P) into methylthioribulose-1-phosphate (MTRu-1-P). This chain is Methylthioribose-1-phosphate isomerase, found in Nitratidesulfovibrio vulgaris (strain DP4) (Desulfovibrio vulgaris).